Consider the following 286-residue polypeptide: Diaminopimelate epimerase (286 aa).

Residues asparagine 13 and asparagine 66 each coordinate substrate. Cysteine 75 functions as the Proton donor in the catalytic mechanism. Substrate-binding positions include 76–77 (GN), asparagine 165, asparagine 198, and 216–217 (ER). The active-site Proton acceptor is cysteine 225. 226–227 (GT) contacts substrate.

This sequence belongs to the diaminopimelate epimerase family. As to quaternary structure, homodimer.

The protein localises to the cytoplasm. It carries out the reaction (2S,6S)-2,6-diaminopimelate = meso-2,6-diaminopimelate. The protein operates within amino-acid biosynthesis; L-lysine biosynthesis via DAP pathway; DL-2,6-diaminopimelate from LL-2,6-diaminopimelate: step 1/1. In terms of biological role, catalyzes the stereoinversion of LL-2,6-diaminopimelate (L,L-DAP) to meso-diaminopimelate (meso-DAP), a precursor of L-lysine and an essential component of the bacterial peptidoglycan. In Thermosynechococcus vestitus (strain NIES-2133 / IAM M-273 / BP-1), this protein is Diaminopimelate epimerase.